The chain runs to 433 residues: Dihydroorotase (433 aa).

Positions 63 and 65 each coordinate Zn(2+). Residues 65 to 67 (HLR) and Asn97 contribute to the substrate site. Residues Asp155, His182, and His235 each contribute to the Zn(2+) site. Asn283 is a substrate binding site. Asp310 is a binding site for Zn(2+). Asp310 is a catalytic residue. His314 lines the substrate pocket.

This sequence belongs to the metallo-dependent hydrolases superfamily. DHOase family. Class I DHOase subfamily. The cofactor is Zn(2+).

It carries out the reaction (S)-dihydroorotate + H2O = N-carbamoyl-L-aspartate + H(+). It functions in the pathway pyrimidine metabolism; UMP biosynthesis via de novo pathway; (S)-dihydroorotate from bicarbonate: step 3/3. Functionally, catalyzes the reversible cyclization of carbamoyl aspartate to dihydroorotate. The sequence is that of Dihydroorotase from Anaeromyxobacter dehalogenans (strain 2CP-1 / ATCC BAA-258).